Here is a 283-residue protein sequence, read N- to C-terminus: 5'-nucleotidase SurE (283 aa).

A divalent metal cation contacts are provided by aspartate 14, aspartate 15, serine 47, and asparagine 105.

This sequence belongs to the SurE nucleotidase family. It depends on a divalent metal cation as a cofactor.

The protein localises to the cytoplasm. It catalyses the reaction a ribonucleoside 5'-phosphate + H2O = a ribonucleoside + phosphate. Nucleotidase that shows phosphatase activity on nucleoside 5'-monophosphates. The sequence is that of 5'-nucleotidase SurE from Chlamydia trachomatis serovar L2 (strain ATCC VR-902B / DSM 19102 / 434/Bu).